A 433-amino-acid chain; its full sequence is Glutamyl-tRNA reductase (433 aa).

Residues 49 to 52 (TCNR), serine 114, 119 to 121 (EPQ), and glutamine 125 each bind substrate. Cysteine 50 acts as the Nucleophile in catalysis. 201 to 206 (GAGETI) contacts NADP(+).

It belongs to the glutamyl-tRNA reductase family. As to quaternary structure, homodimer.

The catalysed reaction is (S)-4-amino-5-oxopentanoate + tRNA(Glu) + NADP(+) = L-glutamyl-tRNA(Glu) + NADPH + H(+). It participates in porphyrin-containing compound metabolism; protoporphyrin-IX biosynthesis; 5-aminolevulinate from L-glutamyl-tRNA(Glu): step 1/2. Functionally, catalyzes the NADPH-dependent reduction of glutamyl-tRNA(Glu) to glutamate 1-semialdehyde (GSA). In Histophilus somni (strain 2336) (Haemophilus somnus), this protein is Glutamyl-tRNA reductase.